Here is an 854-residue protein sequence, read N- to C-terminus: Protein unc-33 (854 aa).

Disordered stretches follow at residues 57–114 (ETVS…IPAP), 130–327 (ELFG…DGNG), and 794–854 (VERV…TGFW). 2 stretches are compositionally biased toward polar residues: residues 58 to 68 (TVSNKSRSSEG) and 75 to 97 (RPNS…TSAR). Basic and acidic residues predominate over residues 193 to 202 (KVLRGEKSTP). Over residues 240–257 (VDDEEEPEAEAQEMEEPQ) the composition is skewed to acidic residues. Over residues 279 to 298 (HPSEDGDSTRNGETPTDRRN) the composition is skewed to basic and acidic residues. Residues 802–811 (SSQQQKPQQN) are compositionally biased toward polar residues. Over residues 816–827 (NSGDFDRNRTKV) the composition is skewed to basic and acidic residues.

This sequence belongs to the metallo-dependent hydrolases superfamily. Hydantoinase/dihydropyrimidinase family. As to quaternary structure, isoform a: Probable monomer. Isoform b: Probable homodimer. Isoform c: Probable homodimer. Probable heterodimer composed of isoform b and isoform c. Interacts with unc-14 and kinesin-1 motor complex light chain klc-1; both interactions regulate unc-33 neurite localization. Interacts with fln-1 (via calponin-homology (CH) domains and filamin repeat 18-19). Isoform c: Interacts with vab-8 isoform a. As to expression, expressed in ventral cord and nerve ring (at protein level). Isoform a: Expressed in nerve ring (at protein level). Expressed in the nervous system, two amphid socket cells and weakly in non-neuronal pharyngeal cells.

The protein localises to the cell projection. It localises to the axon. It is found in the dendrite. Its function is as follows. During neurogenesis, plays an essential role in axonal guidance and outgrowth by regulating the polarization of both microtubule and actin cytoskeletons. Establishes the asymmetry of axonal and dendrite microtubules and the polarized sorting of neuronal proteins. This is achieved in part by regulating the localization of kinesin-like protein unc-104. In neurons without a distal microtubule-organizing center (MTOC), also controls the organization of microtubules in dendrites. During the dorso-ventral axonal guidance and outgrowth of VD neurons, required downstream of Rac GTPases ced-10 and mig-2 to inhibit growth cone filopodial protrusion mediated by the unc-6/netrin receptor unc-40-unc-5. Specifically, regulates growth cone filopodial protrusion polarity, and thus migration, by promoting F-actin polarization and by restricting plus-end microtubule accumulation in the growth cone. Probably downstream of mab-20/Sema2a and mab-20 receptor plx-2, regulates the guidance of DD/VD neuron axons by modulating fln-1 interaction with F-actin which results in the remodeling of the actin cytoskeleton. In hermaphrodites, involved in sex myoblast (SM) migration by regulating the gonad-dependent repulsion of SMs. Functionally, in neurons, required for the polarized sorting of axonal proteins. In PLM neuron, regulates innexin unc-9 gap junction turnover by suppressing unc-9 transport out of gap junctions. Plays a role in locomotion and egg-laying. In PLM neuron, regulates innexin unc-9 gap junction turnover by suppressing unc-9 transport out of gap junctions. This chain is Protein unc-33, found in Caenorhabditis elegans.